We begin with the raw amino-acid sequence, 134 residues long: Small ribosomal subunit protein uS8c (134 aa).

This sequence belongs to the universal ribosomal protein uS8 family. As to quaternary structure, part of the 30S ribosomal subunit.

Its subcellular location is the plastid. The protein resides in the chloroplast. In terms of biological role, one of the primary rRNA binding proteins, it binds directly to 16S rRNA central domain where it helps coordinate assembly of the platform of the 30S subunit. The chain is Small ribosomal subunit protein uS8c (rps8) from Phaseolus vulgaris (Kidney bean).